The sequence spans 320 residues: Acetyl-coenzyme A carboxylase carboxyl transferase subunit alpha (320 aa).

Residues I42 to D295 enclose the CoA carboxyltransferase C-terminal domain.

It belongs to the AccA family. In terms of assembly, acetyl-CoA carboxylase is a heterohexamer composed of biotin carboxyl carrier protein (AccB), biotin carboxylase (AccC) and two subunits each of ACCase subunit alpha (AccA) and ACCase subunit beta (AccD).

The protein resides in the cytoplasm. It catalyses the reaction N(6)-carboxybiotinyl-L-lysyl-[protein] + acetyl-CoA = N(6)-biotinyl-L-lysyl-[protein] + malonyl-CoA. The protein operates within lipid metabolism; malonyl-CoA biosynthesis; malonyl-CoA from acetyl-CoA: step 1/1. Component of the acetyl coenzyme A carboxylase (ACC) complex. First, biotin carboxylase catalyzes the carboxylation of biotin on its carrier protein (BCCP) and then the CO(2) group is transferred by the carboxyltransferase to acetyl-CoA to form malonyl-CoA. This is Acetyl-coenzyme A carboxylase carboxyl transferase subunit alpha from Afipia carboxidovorans (strain ATCC 49405 / DSM 1227 / KCTC 32145 / OM5) (Oligotropha carboxidovorans).